A 305-amino-acid chain; its full sequence is Fe-S cluster assembly protein dre2 (305 aa).

Residues Asp-21–Val-150 are N-terminal SAM-like domain. The tract at residues Pro-151–Leu-195 is linker. Cys-205, Cys-217, Cys-220, and Cys-222 together coordinate [2Fe-2S] cluster. The segment at Cys-205–Cys-222 is fe-S binding site A. 4 residues coordinate [4Fe-4S] cluster: Cys-268, Cys-271, Cys-279, and Cys-282. Short sequence motifs (cx2C motif) lie at residues Cys-268 to Cys-271 and Cys-279 to Cys-282. Positions Cys-268 to Cys-282 are fe-S binding site B.

It belongs to the anamorsin family. In terms of assembly, monomer. Interacts with tah18. Interacts with mia40. The cofactor is [2Fe-2S] cluster. It depends on [4Fe-4S] cluster as a cofactor.

Its subcellular location is the cytoplasm. The protein localises to the mitochondrion intermembrane space. Its function is as follows. Component of the cytosolic iron-sulfur (Fe-S) protein assembly (CIA) machinery required for the maturation of extramitochondrial Fe-S proteins. Part of an electron transfer chain functioning in an early step of cytosolic Fe-S biogenesis, facilitating the de novo assembly of a [4Fe-4S] cluster on the scaffold complex cfd1-nbp35. Electrons are transferred to dre2 from NADPH via the FAD- and FMN-containing protein tah18. Tah18-dre2 are also required for the assembly of the diferric tyrosyl radical cofactor of ribonucleotide reductase (RNR), probably by providing electrons for reduction during radical cofactor maturation in the catalytic small subunit rnr2. In Talaromyces marneffei (strain ATCC 18224 / CBS 334.59 / QM 7333) (Penicillium marneffei), this protein is Fe-S cluster assembly protein dre2.